An 853-amino-acid polypeptide reads, in one-letter code: FIGNL1-interacting regulator of recombination and mitosis (853 aa).

2 positions are modified to phosphoserine; by PLK1: serine 43 and serine 744. Lysine 792 is subject to N6-acetyllysine.

Interacts (via its N-terminal region) with PLK1; controls PLK1 kinase activity. Interacts (via the KVVXF motif) with PPP1CC; controls PLK1 kinase activity. Interacts with FIGNL1; may regulate homologous recombination. Phosphorylation at Ser-43 by PLK1 strengthens FIRRM-PLK1 interaction. Phosphorylation at Ser-744 by PLK1 negatively regulates its interaction with PPP1CC.

It is found in the chromosome. It localises to the centromere. Its subcellular location is the kinetochore. The protein resides in the nucleus. The protein localises to the midbody. It is found in the cytoplasm. It localises to the cytoskeleton. Its subcellular location is the spindle. Its function is as follows. Regulates PLK1 kinase activity at kinetochores and promotes faithful chromosome segregation in prometaphase by bridging kinase and phosphatase activities. Phosphorylation of FIRRM by PLK1 negatively regulates its interaction with the phosphatase, PPP1CC, thus creating a negative feedback loop for maintaining proper PLK1 kinase activity during mitosis. In complex with FIGL1 may regulate homologous recombination. This is FIGNL1-interacting regulator of recombination and mitosis from Homo sapiens (Human).